The chain runs to 110 residues: Prothymosin alpha (110 aa).

Met-1 is subject to N-acetylmethionine. Residues 1–110 (MSDAAVDTSS…TKKQKTDEDD (110 aa)) are disordered. An N-acetylserine; in Prothymosin alpha, N-terminally processed modification is found at Ser-2. Position 2 is a phosphoserine (Ser-2). Thr-8 bears the Phosphothreonine mark. Ser-9 and Ser-10 each carry phosphoserine. Thr-13 and Thr-14 each carry phosphothreonine. The segment covering 13–31 (TTKDLKEKKEVVEEAENGR) has biased composition (basic and acidic residues). Residue Lys-15 is modified to N6-acetyllysine; alternate. An N6-succinyllysine; alternate modification is found at Lys-15. The segment covering 42–83 (ENGEQEADNEVDEEEEEGGEEEEEEEEGDGEEEDGDEDEEAE) has biased composition (acidic residues). Residues 100 to 110 (DTKKQKTDEDD) are compositionally biased toward basic and acidic residues. Thr-101 carries the post-translational modification Phosphothreonine. An N6-acetyllysine; alternate modification is found at Lys-102. Lys-102 participates in a covalent cross-link: Glycyl lysine isopeptide (Lys-Gly) (interchain with G-Cter in SUMO2); alternate. Position 106 is a phosphothreonine (Thr-106).

It belongs to the pro/parathymosin family. In terms of assembly, interacts with NUPR1; regulates apoptotic process. Covalently linked to a small RNA of about 20 nucleotides.

The protein resides in the nucleus. Functionally, prothymosin alpha may mediate immune function by conferring resistance to certain opportunistic infections. The chain is Prothymosin alpha (PTMA) from Pongo abelii (Sumatran orangutan).